The chain runs to 304 residues: Secreted mono- and diacylglycerol lipase MDL2 (304 aa).

The N-terminal stretch at 1 to 19 is a signal peptide; that stretch reads MILGRTISLFLGCSALVSG. Cys55 and Cys297 form a disulfide bridge. N-linked (GlcNAc...) asparagine glycans are attached at residues Asn102 and Asn161. The active-site Nucleophile is the Ser171. Residue Asp228 is part of the active site. Asn253 carries an N-linked (GlcNAc...) asparagine glycan. The active site involves His281.

The protein belongs to the AB hydrolase superfamily. Lipase family. Class 3 subfamily.

The protein localises to the secreted. It is found in the cell wall. The enzyme catalyses a monoacylglycerol + H2O = glycerol + a fatty acid + H(+). It carries out the reaction a diacylglycerol + H2O = a monoacylglycerol + a fatty acid + H(+). In terms of biological role, secreted lipase involved in Dandruff and seborrheic dermatitis (D/SD) probably via lipase-mediated breakdown of sebaceous lipids and release of irritating free fatty acids. Shows activity against monoglyceride and diglyceride substrates, but not triglyceride substrates and does not exhibit regio-selective production of diacylglycerols. Hydrolyzes both 1,2- and 1,3-diacylglycerols. Also hydrolyzes distearin, dilinolein and dipalmitolein. Cleaves oleic acid from 1,2 isomers of diolein on both the 1 and the 2 position of the glycerol backbone, resulting mainly in free fatty acids but no monoolein is detected. Shows activity on monoolein and liberates mostly free fatty acids, but can also perform the reverse reaction and produce diolein. In Malassezia globosa (strain ATCC MYA-4612 / CBS 7966) (Dandruff-associated fungus), this protein is Secreted mono- and diacylglycerol lipase MDL2.